The primary structure comprises 276 residues: 3,4-dihydroxyphenylacetate 2,3-dioxygenase (276 aa).

Fe cation serves as cofactor.

It catalyses the reaction 3,4-dihydroxyphenylacetate + O2 = 2-hydroxy-5-carboxymethylmuconate semialdehyde + H(+). It participates in aromatic compound metabolism; 4-hydroxyphenylacetate degradation; pyruvate and succinate semialdehyde from 4-hydroxyphenylacetate: step 2/7. In terms of biological role, transforms homoprotocatechuic acid (HPC) into 5-carboxymethyl-2-hydroxy-muconic semialdehyde (CHMS). The chain is 3,4-dihydroxyphenylacetate 2,3-dioxygenase (hpcB) from Escherichia coli.